Reading from the N-terminus, the 291-residue chain is Lipoyl synthase, mitochondrial (291 aa).

Cysteine 45, cysteine 50, cysteine 56, cysteine 71, cysteine 75, cysteine 78, and serine 283 together coordinate [4Fe-4S] cluster. In terms of domain architecture, Radical SAM core spans 57–272 (WGEGTATFMI…EKIGKELGFR (216 aa)).

Belongs to the radical SAM superfamily. Lipoyl synthase family. Requires [4Fe-4S] cluster as cofactor.

The protein resides in the mitochondrion. The catalysed reaction is [[Fe-S] cluster scaffold protein carrying a second [4Fe-4S](2+) cluster] + N(6)-octanoyl-L-lysyl-[protein] + 2 oxidized [2Fe-2S]-[ferredoxin] + 2 S-adenosyl-L-methionine + 4 H(+) = [[Fe-S] cluster scaffold protein] + N(6)-[(R)-dihydrolipoyl]-L-lysyl-[protein] + 4 Fe(3+) + 2 hydrogen sulfide + 2 5'-deoxyadenosine + 2 L-methionine + 2 reduced [2Fe-2S]-[ferredoxin]. The protein operates within protein modification; protein lipoylation via endogenous pathway; protein N(6)-(lipoyl)lysine from octanoyl-[acyl-carrier-protein]: step 2/2. In terms of biological role, catalyzes the radical-mediated insertion of two sulfur atoms into the C-6 and C-8 positions of the octanoyl moiety bound to the lipoyl domains of lipoate-dependent enzymes, thereby converting the octanoylated domains into lipoylated derivatives. The sequence is that of Lipoyl synthase, mitochondrial from Nematostella vectensis (Starlet sea anemone).